We begin with the raw amino-acid sequence, 117 residues long: UPF0127 protein PYRAB11210 (117 aa).

The protein belongs to the UPF0127 family.

The sequence is that of UPF0127 protein PYRAB11210 from Pyrococcus abyssi (strain GE5 / Orsay).